The following is a 194-amino-acid chain: Putative manganese efflux pump MntP (194 aa).

A run of 6 helical transmembrane segments spans residues 3–23, 40–60, 65–85, 109–129, 134–154, and 169–189; these read FYATIILALALSMDAFAVAVC, GFIFGIIEASTPIIGWALGLY, IIQWDHWVAFGLLVILGGRMI, LIATGIATSLDAMAIGVGLAF, IVHTAMTIGMMTMIMATLGML, and IIGGMVLIAIGFNILFEHLDL.

Belongs to the MntP (TC 9.B.29) family.

The protein localises to the cell inner membrane. Functionally, probably functions as a manganese efflux pump. The protein is Putative manganese efflux pump MntP of Proteus mirabilis (strain HI4320).